The sequence spans 181 residues: Probable Brix domain-containing ribosomal biogenesis protein (181 aa).

A Brix domain is found at 5-181 (CKVIITTSRE…RIKKVVYRHV (177 aa)).

Probably involved in the biogenesis of the ribosome. The protein is Probable Brix domain-containing ribosomal biogenesis protein of Pyrobaculum aerophilum (strain ATCC 51768 / DSM 7523 / JCM 9630 / CIP 104966 / NBRC 100827 / IM2).